Reading from the N-terminus, the 397-residue chain is Odorant receptor 98a (397 aa).

The Cytoplasmic segment spans residues 1-43 (MLFNYLRKPNPTNLLTSPDSFRYFEYGMFCMGWHTPATHKIIY). Residues 44–64 (YITSCLIFAWCAVYLPIGIII) form a helical membrane-spanning segment. The Extracellular portion of the chain corresponds to 65 to 77 (SFKTDINTFTPNE). The chain crosses the membrane as a helical span at residues 78 to 98 (LLTVMQLFFNSVGMPFKVLFF). Topologically, residues 99–138 (NLYISGFYKAKKLLSEMDKRCTTLKERVEVHQGVVRCNKA) are cytoplasmic. Residues 139–159 (YLIYQFIYTAYTISTFLSAAL) form a helical membrane-spanning segment. Over 160-192 (SGKLPWRIYNPFVDFRESRSSFWKAALNETALM) the chain is Extracellular. An N-linked (GlcNAc...) asparagine glycan is attached at N187. A helical membrane pass occupies residues 193 to 213 (LFAVTQTLMSDIYPLLYGLIL). Residues 214 to 266 (RVHLKLLRLRVESLCTDSGKSDAENEQDLIKCIKDHNLIIDYAAAIRPAVTRT) are Cytoplasmic-facing. A helical membrane pass occupies residues 267–287 (IFVQFLLIGICLGLSMINLLF). Residues 288 to 293 (FADIWT) lie on the Extracellular side of the membrane. Residues 294–314 (GLATVAYINGLMVQTFPFCFV) traverse the membrane as a helical segment. The Cytoplasmic segment spans residues 315–354 (CDLLKKDCELLVSAIFHSNWINSSRSYKSSLRYFLKNAQK). Residues 355–375 (SIAFTAGSIFPISTGSNIKVA) form a helical membrane-spanning segment. At 376–397 (KLAFSVVTFVNQLNIADRLTKN) the chain is on the extracellular side.

The protein belongs to the insect chemoreceptor superfamily. Heteromeric odorant receptor channel (TC 1.A.69) family. Or2a subfamily. Interacts with Orco. Complexes exist early in the endomembrane system in olfactory sensory neurons (OSNs), coupling these complexes to the conserved ciliary trafficking pathway. As to expression, expressed in olfactory sensory neurons in the antenna.

The protein localises to the cell membrane. In terms of biological role, odorant receptor which mediates acceptance or avoidance behavior, depending on its substrates. The odorant receptor repertoire encodes a large collection of odor stimuli that vary widely in identity, intensity, and duration. May form a complex with Orco to form odorant-sensing units, providing sensitive and prolonged odorant signaling and calcium permeability. The polypeptide is Odorant receptor 98a (Or98a) (Drosophila melanogaster (Fruit fly)).